The following is a 188-amino-acid chain: Phosphoribosylglycinamide formyltransferase (188 aa).

12–14 (GSN) serves as a coordination point for N(1)-(5-phospho-beta-D-ribosyl)glycinamide. Residues Lys-66, 91–94 (MRLI), and Asn-108 contribute to the (6R)-10-formyltetrahydrofolate site. The active-site Proton donor is His-110.

The protein belongs to the GART family.

The enzyme catalyses N(1)-(5-phospho-beta-D-ribosyl)glycinamide + (6R)-10-formyltetrahydrofolate = N(2)-formyl-N(1)-(5-phospho-beta-D-ribosyl)glycinamide + (6S)-5,6,7,8-tetrahydrofolate + H(+). It participates in purine metabolism; IMP biosynthesis via de novo pathway; N(2)-formyl-N(1)-(5-phospho-D-ribosyl)glycinamide from N(1)-(5-phospho-D-ribosyl)glycinamide (10-formyl THF route): step 1/1. In terms of biological role, catalyzes the transfer of a formyl group from 10-formyltetrahydrofolate to 5-phospho-ribosyl-glycinamide (GAR), producing 5-phospho-ribosyl-N-formylglycinamide (FGAR) and tetrahydrofolate. In Staphylococcus aureus (strain MRSA252), this protein is Phosphoribosylglycinamide formyltransferase.